The chain runs to 378 residues: MNIWLSMLTTTGLGAIIGGFTNHLAIKMLFRPHRPMYIGKFQVPFTPGLIPKRRDELAVQLGKMVVEHLLTPEGIGKKLTNEEFQKGLIHWAQVEVGKVMTNEQSLRHMLEKWDVAHVEKEATEKIEQVIIEKIEAFLEEYYTYTWEQALPHSVHEKIENAIPNVSAFILKRATHFFESEEGKSRLSKMIDDFFASRGALLNLVGMFLGNVSVVDRVQPEVIKFLGQDGTKQLLTDVLQKEWEKLKGRDVKELETFVEKEMIVSSILSAVQVEETVSKFLNQSVQQVCEPVRETIIEKVVPGVVTKGLKWGTENVESILNNLHLAEIVQQEVSTFSTERLEDLVLSITKNELKMITYLGALLGGMIGIVQGLLLLFLK.

A run of 2 helical transmembrane segments spans residues 1 to 21 and 357 to 377; these read MNIWLSMLTTTGLGAIIGGFT and YLGALLGGMIGIVQGLLLLFL.

It belongs to the UPF0754 family.

It is found in the cell membrane. The chain is UPF0754 membrane protein BCA_0919 from Bacillus cereus (strain 03BB102).